We begin with the raw amino-acid sequence, 196 residues long: UPF0215 protein MM_1007 (196 aa).

The protein belongs to the UPF0215 family.

This chain is UPF0215 protein MM_1007, found in Methanosarcina mazei (strain ATCC BAA-159 / DSM 3647 / Goe1 / Go1 / JCM 11833 / OCM 88) (Methanosarcina frisia).